The primary structure comprises 452 residues: Aspartyl/glutamyl-tRNA(Asn/Gln) amidotransferase subunit B (452 aa).

The protein belongs to the GatB/GatE family. GatB subfamily. Heterotrimer of A, B and C subunits.

It catalyses the reaction L-glutamyl-tRNA(Gln) + L-glutamine + ATP + H2O = L-glutaminyl-tRNA(Gln) + L-glutamate + ADP + phosphate + H(+). It carries out the reaction L-aspartyl-tRNA(Asn) + L-glutamine + ATP + H2O = L-asparaginyl-tRNA(Asn) + L-glutamate + ADP + phosphate + 2 H(+). Allows the formation of correctly charged Asn-tRNA(Asn) or Gln-tRNA(Gln) through the transamidation of misacylated Asp-tRNA(Asn) or Glu-tRNA(Gln) in organisms which lack either or both of asparaginyl-tRNA or glutaminyl-tRNA synthetases. The reaction takes place in the presence of glutamine and ATP through an activated phospho-Asp-tRNA(Asn) or phospho-Glu-tRNA(Gln). In Methanosphaera stadtmanae (strain ATCC 43021 / DSM 3091 / JCM 11832 / MCB-3), this protein is Aspartyl/glutamyl-tRNA(Asn/Gln) amidotransferase subunit B.